The following is a 296-amino-acid chain: UDP-N-acetylglucosamine transporter TMEM241 homolog (296 aa).

10 consecutive transmembrane segments (helical) span residues 7–29 (AVGL…VLSV), 41–61 (WQTL…WLEI), 67–87 (SDVV…YAGS), 93–113 (LPIP…YGFQ), 126–146 (IFSI…DPQF), 147–167 (DADG…YKVF), 187–207 (VFSV…ISAL), 217–237 (FHSG…ASVK), 248–266 (ASWN…LIYF), and 272–291 (VPLT…LVYA).

It belongs to the nucleotide-sugar transporter family. SLC35A subfamily.

It localises to the golgi apparatus. The protein resides in the cis-Golgi network membrane. Golgi-localized UDP-N-acetylglucosamine (UDP-GlcNAc) transporter that transports UDP-N-acetylglucosamine into Golgi lumen. This is UDP-N-acetylglucosamine transporter TMEM241 homolog (tmem241) from Xenopus laevis (African clawed frog).